A 371-amino-acid polypeptide reads, in one-letter code: Ferrochelatase (371 aa).

Fe cation-binding residues include His218 and Glu299.

The protein belongs to the ferrochelatase family.

It localises to the cytoplasm. The enzyme catalyses heme b + 2 H(+) = protoporphyrin IX + Fe(2+). The protein operates within porphyrin-containing compound metabolism; protoheme biosynthesis; protoheme from protoporphyrin-IX: step 1/1. In terms of biological role, catalyzes the ferrous insertion into protoporphyrin IX. The sequence is that of Ferrochelatase from Cupriavidus pinatubonensis (strain JMP 134 / LMG 1197) (Cupriavidus necator (strain JMP 134)).